A 358-amino-acid chain; its full sequence is Metacaspase-3 (358 aa).

Residues Met1 to Arg84 form an important for catalytic activity region. Catalysis depends on residues His168 and Cys223.

This sequence belongs to the peptidase C14B family. In terms of processing, in epimastigotes, the unprocessed enzyme appears to be the main form. Auto-processing is dispensable for catalytic activity towards small oligopeptide substrates.

The protein resides in the cytoplasm. It is found in the nucleus. With respect to regulation, activated by Ca(2+). Functionally, cysteine protease that cleaves specifically after arginine or lysine residues. In epimastigotes, may play a role in cell cycle G1/S transition. In Trypanosoma cruzi (strain CL Brener), this protein is Metacaspase-3.